Here is a 191-residue protein sequence, read N- to C-terminus: Probable molybdenum cofactor guanylyltransferase (191 aa).

GTP-binding positions include 6–8 (LAG), lysine 18, aspartate 67, and aspartate 92. Aspartate 92 is a Mg(2+) binding site.

This sequence belongs to the MobA family. Mg(2+) is required as a cofactor.

It is found in the cytoplasm. The enzyme catalyses Mo-molybdopterin + GTP + H(+) = Mo-molybdopterin guanine dinucleotide + diphosphate. Functionally, transfers a GMP moiety from GTP to Mo-molybdopterin (Mo-MPT) cofactor (Moco or molybdenum cofactor) to form Mo-molybdopterin guanine dinucleotide (Mo-MGD) cofactor. This is Probable molybdenum cofactor guanylyltransferase from Thermococcus gammatolerans (strain DSM 15229 / JCM 11827 / EJ3).